We begin with the raw amino-acid sequence, 42 residues long: Purine nucleoside phosphorylase DeoD-type (42 aa).

Residue 8–9 coordinates a purine D-ribonucleoside; the sequence is SD. Asp-9 functions as the Proton donor in the catalytic mechanism.

Belongs to the PNP/UDP phosphorylase family. As to quaternary structure, homohexamer; trimer of homodimers.

It carries out the reaction a purine D-ribonucleoside + phosphate = a purine nucleobase + alpha-D-ribose 1-phosphate. The catalysed reaction is a purine 2'-deoxy-D-ribonucleoside + phosphate = a purine nucleobase + 2-deoxy-alpha-D-ribose 1-phosphate. Functionally, catalyzes the reversible phosphorolytic breakdown of the N-glycosidic bond in the beta-(deoxy)ribonucleoside molecules, with the formation of the corresponding free purine bases and pentose-1-phosphate. This is Purine nucleoside phosphorylase DeoD-type from Mycoplasmoides pirum (Mycoplasma pirum).